The sequence spans 282 residues: Sulfur carrier protein FdhD (282 aa).

The active-site Cysteine persulfide intermediate is C115.

It belongs to the FdhD family.

The protein localises to the cytoplasm. Functionally, required for formate dehydrogenase (FDH) activity. Acts as a sulfur carrier protein that transfers sulfur from IscS to the molybdenum cofactor prior to its insertion into FDH. The polypeptide is Sulfur carrier protein FdhD (Streptomyces coelicolor (strain ATCC BAA-471 / A3(2) / M145)).